A 95-amino-acid chain; its full sequence is Co-chaperonin GroES (95 aa).

The tract at residues 36 to 55 (QEGEVVAVGSGKTLDDGSKV) is disordered.

The protein belongs to the GroES chaperonin family. In terms of assembly, heptamer of 7 subunits arranged in a ring. Interacts with the chaperonin GroEL.

It localises to the cytoplasm. Functionally, together with the chaperonin GroEL, plays an essential role in assisting protein folding. The GroEL-GroES system forms a nano-cage that allows encapsulation of the non-native substrate proteins and provides a physical environment optimized to promote and accelerate protein folding. GroES binds to the apical surface of the GroEL ring, thereby capping the opening of the GroEL channel. This chain is Co-chaperonin GroES, found in Natranaerobius thermophilus (strain ATCC BAA-1301 / DSM 18059 / JW/NM-WN-LF).